The following is a 104-amino-acid chain: SQAALAVNISAARGLQDVLRTNLGPKGTMKMLVSGAGDIKLTKDGNVLLHEMQIQHPTASLIAKVATAQDDITGDGXTSNVLIIGELLKQADLYISEGLHPRII.

Gly24 contacts ADP. Gly24 lines the ATP pocket. Mg(2+) is bound at residue Asp75. 3 residues coordinate ADP: Gly76, Thr78, and Ser79. Gly76 and Thr78 together coordinate ATP.

Belongs to the TCP-1 chaperonin family. As to quaternary structure, component of the chaperonin-containing T-complex (TRiC), a hexadecamer composed of two identical back-to-back stacked rings enclosing a protein folding chamber. Each ring is made up of eight different subunits: TCP1/CCT1, CCT2, CCT3, CCT4, CCT5, CCT6A/CCT6, CCT7, CCT8. Interacts with PACRG.

Its subcellular location is the cytoplasm. It catalyses the reaction ATP + H2O = ADP + phosphate + H(+). Its function is as follows. Component of the chaperonin-containing T-complex (TRiC), a molecular chaperone complex that assists the folding of actin, tubulin and other proteins upon ATP hydrolysis. The TRiC complex mediates the folding of WRAP53/TCAB1, thereby regulating telomere maintenance. This Sus scrofa (Pig) protein is T-complex protein 1 subunit zeta (CCT6).